A 477-amino-acid chain; its full sequence is Glutamyl-tRNA reductase (477 aa).

Residues 49-52 (TCNR), S109, 114-116 (EQQ), and Q120 contribute to the substrate site. Catalysis depends on C50, which acts as the Nucleophile. 189-194 (GAGAMG) lines the NADP(+) pocket.

This sequence belongs to the glutamyl-tRNA reductase family. As to quaternary structure, homodimer.

It catalyses the reaction (S)-4-amino-5-oxopentanoate + tRNA(Glu) + NADP(+) = L-glutamyl-tRNA(Glu) + NADPH + H(+). It participates in porphyrin-containing compound metabolism; protoporphyrin-IX biosynthesis; 5-aminolevulinate from L-glutamyl-tRNA(Glu): step 1/2. Catalyzes the NADPH-dependent reduction of glutamyl-tRNA(Glu) to glutamate 1-semialdehyde (GSA). This Nocardia farcinica (strain IFM 10152) protein is Glutamyl-tRNA reductase.